A 174-amino-acid chain; its full sequence is ATP-dependent protease subunit HslV (174 aa).

Residue Thr2 is part of the active site. Na(+) contacts are provided by Gly157, Asp160, and Thr163.

It belongs to the peptidase T1B family. HslV subfamily. In terms of assembly, a double ring-shaped homohexamer of HslV is capped on each side by a ring-shaped HslU homohexamer. The assembly of the HslU/HslV complex is dependent on binding of ATP.

The protein localises to the cytoplasm. The enzyme catalyses ATP-dependent cleavage of peptide bonds with broad specificity.. Allosterically activated by HslU binding. Its function is as follows. Protease subunit of a proteasome-like degradation complex believed to be a general protein degrading machinery. The polypeptide is ATP-dependent protease subunit HslV (Aliivibrio fischeri (strain MJ11) (Vibrio fischeri)).